Consider the following 689-residue polypeptide: Glycine--tRNA ligase beta subunit (689 aa).

This sequence belongs to the class-II aminoacyl-tRNA synthetase family. In terms of assembly, tetramer of two alpha and two beta subunits.

The protein resides in the cytoplasm. It carries out the reaction tRNA(Gly) + glycine + ATP = glycyl-tRNA(Gly) + AMP + diphosphate. The polypeptide is Glycine--tRNA ligase beta subunit (Salmonella paratyphi C (strain RKS4594)).